A 257-amino-acid polypeptide reads, in one-letter code: Trans-aconitate 2-methyltransferase (257 aa).

It belongs to the methyltransferase superfamily. Tam family.

It localises to the cytoplasm. It carries out the reaction trans-aconitate + S-adenosyl-L-methionine = (E)-3-(methoxycarbonyl)pent-2-enedioate + S-adenosyl-L-homocysteine. Catalyzes the S-adenosylmethionine monomethyl esterification of trans-aconitate. This is Trans-aconitate 2-methyltransferase from Sinorhizobium fredii (strain NBRC 101917 / NGR234).